The sequence spans 620 residues: UvrABC system protein C (620 aa).

Residues 13-92 enclose the GIY-YIG domain; it reads DKPGVYIMKN…IKKYSPRYNI (80 aa). The UVR domain maps to 204–239; that stretch reads TSIIKKLKLEMEKAAEELEFEKAAKIRDRILAIELI.

Belongs to the UvrC family. As to quaternary structure, interacts with UvrB in an incision complex.

The protein resides in the cytoplasm. Functionally, the UvrABC repair system catalyzes the recognition and processing of DNA lesions. UvrC both incises the 5' and 3' sides of the lesion. The N-terminal half is responsible for the 3' incision and the C-terminal half is responsible for the 5' incision. The polypeptide is UvrABC system protein C (Clostridium perfringens (strain ATCC 13124 / DSM 756 / JCM 1290 / NCIMB 6125 / NCTC 8237 / Type A)).